Reading from the N-terminus, the 578-residue chain is Protein O-linked-mannose beta-1,4-N-acetylglucosaminyltransferase 2 (578 aa).

Topologically, residues methionine 1 to proline 4 are cytoplasmic. The chain crosses the membrane as a helical; Signal-anchor for type II membrane protein span at residues alanine 5 to leucine 25. The Lumenal segment spans residues valine 26–threonine 578. N-linked (GlcNAc...) asparagine glycans are attached at residues asparagine 98, asparagine 275, and asparagine 541. A Fibronectin type-III domain is found at arginine 482–threonine 578.

Belongs to the glycosyltransferase 61 family.

Its subcellular location is the endoplasmic reticulum membrane. It carries out the reaction 3-O-(alpha-D-mannosyl)-L-threonyl-[protein] + UDP-N-acetyl-alpha-D-glucosamine = 3-O-(N-acetyl-beta-D-glucosaminyl-(1-&gt;4)-alpha-D-mannosyl)-L-threonyl-[protein] + UDP + H(+). Its pathway is protein modification; protein glycosylation. O-linked mannose beta-1,4-N-acetylglucosaminyltransferase that transfers UDP-N-acetyl-D-glucosamine to the 4-position of the mannose to generate N-acetyl-D-glucosamine-beta-1,4-O-D-mannosylprotein. Involved in the biosynthesis of the phosphorylated O-mannosyl trisaccharide (N-acetylgalactosamine-beta-3-N-acetylglucosamine-beta-4-(phosphate-6-)mannose), a carbohydrate structure present in alpha-dystroglycan (DAG1), which is required for binding laminin G-like domain-containing extracellular proteins with high affinity. The sequence is that of Protein O-linked-mannose beta-1,4-N-acetylglucosaminyltransferase 2 (pomgnt2) from Danio rerio (Zebrafish).